A 443-amino-acid polypeptide reads, in one-letter code: Phosphoglucosamine mutase (443 aa).

Ser102 acts as the Phosphoserine intermediate in catalysis. 4 residues coordinate Mg(2+): Ser102, Asp241, Asp243, and Asp245. Ser102 is subject to Phosphoserine.

The protein belongs to the phosphohexose mutase family. The cofactor is Mg(2+). Activated by phosphorylation.

The enzyme catalyses alpha-D-glucosamine 1-phosphate = D-glucosamine 6-phosphate. Catalyzes the conversion of glucosamine-6-phosphate to glucosamine-1-phosphate. This Polaromonas naphthalenivorans (strain CJ2) protein is Phosphoglucosamine mutase.